A 108-amino-acid chain; its full sequence is Phosphoribosyl-ATP pyrophosphatase (108 aa).

This sequence belongs to the PRA-PH family.

Its subcellular location is the cytoplasm. It carries out the reaction 1-(5-phospho-beta-D-ribosyl)-ATP + H2O = 1-(5-phospho-beta-D-ribosyl)-5'-AMP + diphosphate + H(+). The protein operates within amino-acid biosynthesis; L-histidine biosynthesis; L-histidine from 5-phospho-alpha-D-ribose 1-diphosphate: step 2/9. This Trichlorobacter lovleyi (strain ATCC BAA-1151 / DSM 17278 / SZ) (Geobacter lovleyi) protein is Phosphoribosyl-ATP pyrophosphatase.